Consider the following 299-residue polypeptide: Small ribosomal subunit protein uS2 (299 aa).

A disordered region spans residues 227 to 299 (SERKSEKSTK…DKAKASNEEE (73 aa)).

This sequence belongs to the universal ribosomal protein uS2 family.

The sequence is that of Small ribosomal subunit protein uS2 from Christiangramia forsetii (strain DSM 17595 / CGMCC 1.15422 / KT0803) (Gramella forsetii).